The sequence spans 365 residues: Probable 7-methylxanthine methyltransferase 4 (365 aa).

Tyr-18 provides a ligand contact to S-adenosyl-L-homocysteine. Thr-25 contacts theobromine. 6 residues coordinate S-adenosyl-L-homocysteine: Cys-62, Gln-67, Asp-99, Leu-100, Ser-132, and Phe-133. Theobromine contacts are provided by Tyr-150, His-153, and Trp-154. Positions 170, 256, 258, and 259 each coordinate Mg(2+). Phe-311 is a binding site for theobromine.

The protein belongs to the methyltransferase superfamily. Type-7 methyltransferase family. It depends on Mg(2+) as a cofactor.

The catalysed reaction is 7-methylxanthine + S-adenosyl-L-methionine = theobromine + S-adenosyl-L-homocysteine + H(+). The protein operates within alkaloid biosynthesis. Involved in the biosynthesis of theobromine. This chain is Probable 7-methylxanthine methyltransferase 4, found in Theobroma cacao (Cacao).